A 196-amino-acid polypeptide reads, in one-letter code: Probable malonic semialdehyde reductase RutE (196 aa).

This sequence belongs to the nitroreductase family. HadB/RutE subfamily. It depends on FMN as a cofactor.

It carries out the reaction 3-hydroxypropanoate + NADP(+) = 3-oxopropanoate + NADPH + H(+). May reduce toxic product malonic semialdehyde to 3-hydroxypropionic acid, which is excreted. This is Probable malonic semialdehyde reductase RutE from Escherichia coli O81 (strain ED1a).